Reading from the N-terminus, the 410-residue chain is Protein ea47 (410 aa).

In Escherichia coli (Bacteriophage lambda), this protein is Protein ea47 (ea47).